The chain runs to 314 residues: Acetyl-coenzyme A carboxylase carboxyl transferase subunit alpha (314 aa).

One can recognise a CoA carboxyltransferase C-terminal domain in the interval 38–292 (RLERKSAALL…ANAIDEELDA (255 aa)).

The protein belongs to the AccA family. Acetyl-CoA carboxylase is a heterohexamer composed of biotin carboxyl carrier protein (AccB), biotin carboxylase (AccC) and two subunits each of ACCase subunit alpha (AccA) and ACCase subunit beta (AccD).

It is found in the cytoplasm. It carries out the reaction N(6)-carboxybiotinyl-L-lysyl-[protein] + acetyl-CoA = N(6)-biotinyl-L-lysyl-[protein] + malonyl-CoA. Its pathway is lipid metabolism; malonyl-CoA biosynthesis; malonyl-CoA from acetyl-CoA: step 1/1. Component of the acetyl coenzyme A carboxylase (ACC) complex. First, biotin carboxylase catalyzes the carboxylation of biotin on its carrier protein (BCCP) and then the CO(2) group is transferred by the carboxyltransferase to acetyl-CoA to form malonyl-CoA. The protein is Acetyl-coenzyme A carboxylase carboxyl transferase subunit alpha of Erythrobacter litoralis (strain HTCC2594).